A 349-amino-acid chain; its full sequence is Holliday junction branch migration complex subunit RuvB (349 aa).

The segment at 1–186 is large ATPase domain (RuvB-L); the sequence is MSEDYLDRDV…FGFTAHMDFY (186 aa). Residues Leu-25, Arg-26, Gly-67, Lys-70, Thr-71, Ser-72, 133-135, Arg-176, Tyr-186, and Arg-223 each bind ATP; that span reads EDF. A Mg(2+)-binding site is contributed by Thr-71. A small ATPAse domain (RuvB-S) region spans residues 187–257; sequence EPTELEGVLA…VAKAALAVYD (71 aa). The tract at residues 260-349 is head domain (RuvB-H); the sequence is ELGLDRLDRA…GLSQPGLFES (90 aa). Positions 315 and 320 each coordinate DNA.

This sequence belongs to the RuvB family. Homohexamer. Forms an RuvA(8)-RuvB(12)-Holliday junction (HJ) complex. HJ DNA is sandwiched between 2 RuvA tetramers; dsDNA enters through RuvA and exits via RuvB. An RuvB hexamer assembles on each DNA strand where it exits the tetramer. Each RuvB hexamer is contacted by two RuvA subunits (via domain III) on 2 adjacent RuvB subunits; this complex drives branch migration. In the full resolvosome a probable DNA-RuvA(4)-RuvB(12)-RuvC(2) complex forms which resolves the HJ.

The protein resides in the cytoplasm. It carries out the reaction ATP + H2O = ADP + phosphate + H(+). Its function is as follows. The RuvA-RuvB-RuvC complex processes Holliday junction (HJ) DNA during genetic recombination and DNA repair, while the RuvA-RuvB complex plays an important role in the rescue of blocked DNA replication forks via replication fork reversal (RFR). RuvA specifically binds to HJ cruciform DNA, conferring on it an open structure. The RuvB hexamer acts as an ATP-dependent pump, pulling dsDNA into and through the RuvAB complex. RuvB forms 2 homohexamers on either side of HJ DNA bound by 1 or 2 RuvA tetramers; 4 subunits per hexamer contact DNA at a time. Coordinated motions by a converter formed by DNA-disengaged RuvB subunits stimulates ATP hydrolysis and nucleotide exchange. Immobilization of the converter enables RuvB to convert the ATP-contained energy into a lever motion, pulling 2 nucleotides of DNA out of the RuvA tetramer per ATP hydrolyzed, thus driving DNA branch migration. The RuvB motors rotate together with the DNA substrate, which together with the progressing nucleotide cycle form the mechanistic basis for DNA recombination by continuous HJ branch migration. Branch migration allows RuvC to scan DNA until it finds its consensus sequence, where it cleaves and resolves cruciform DNA. This chain is Holliday junction branch migration complex subunit RuvB, found in Mycobacterium leprae (strain Br4923).